Consider the following 1124-residue polypeptide: Transient-receptor-potential-like protein (1124 aa).

Residues 1–24 (MGRKKKLPTGVSSGVSHASSAPKS) are disordered. The Cytoplasmic portion of the chain corresponds to 1 to 340 (MGRKKKLPTG…GFRRKSIVDK (340 aa)). Low complexity predominate over residues 10 to 21 (GVSSGVSHASSA). 3 ANK repeats span residues 40–69 (LEEK…RHQH), 78–107 (LGRR…ETKD), and 152–181 (PDIT…AVPV). A helical transmembrane segment spans residues 341 to 361 (VICIAQVAVLFPLYCLIYMCA). The Extracellular portion of the chain corresponds to 362–373 (PNCRTGQLMRKP). Residues 374-394 (FMKFLIHASSYLFFLFILILV) form a helical membrane-spanning segment. At 395 to 431 (SQRADDDFVRIFGTTRMKKELAEQELRQRGQTPSKLE) the chain is on the cytoplasmic side. Residues 432–452 (LIVVMYVIGFVWEEVQEIFAV) traverse the membrane as a helical segment. The Extracellular portion of the chain corresponds to 453-512 (GMKSYLRNMWNFIDFLRNSLYVSVMCLRAFAYIQQATEIARDPQMAYIPREKWHDFDPQL). The chain crosses the membrane as a helical span at residues 513 to 533 (IAEGLFAAANVFSALKLVHLF). The Cytoplasmic portion of the chain corresponds to 534-548 (SINPHLGPLQISLGR). A helical transmembrane segment spans residues 549 to 569 (MVIDIVKFFFIYTLVLFAFAC). The Extracellular segment spans residues 570-645 (GLNQLLWYFA…GIKSYTRFWG (76 aa)). Residues 646 to 666 (LLMFGSYSVINVIVLLNLLIA) traverse the membrane as a helical segment. The Cytoplasmic segment spans residues 667 to 1124 (MMSNSYAMID…TSPQRPKHRN (458 aa)). Calmodulin-binding regions lie at residues 710-728 (SVKW…IDRQ) and 853-895 (IPSK…SQIG). 2 disordered regions span residues 978 to 1013 (RAMA…GVSH) and 1031 to 1124 (LIAN…KHRN). Residues 1035–1063 (SAPSAPTAPPKKSAPTAPTPTYKPTTHAP) are compositionally biased toward low complexity. Basic and acidic residues-rich tracts occupy residues 1069–1081 (GNRE…DGVR) and 1090–1106 (HVVD…RDNV). Polar residues predominate over residues 1107-1118 (SDISSIASTSPQ).

The protein belongs to the transient receptor (TC 1.A.4) family. STrpC subfamily. As to quaternary structure, forms heteromultimers with Trpgamma and, to a lower extent, with trp. Interacts with Fkbp59 in vivo and is found in the inaD signaling complex. Expressed predominantly in the rhabdomeres of photoreceptor cells.

The protein resides in the membrane. The protein localises to the cell projection. Its subcellular location is the rhabdomere membrane. Its function is as follows. A light-sensitive calcium channel that is required for inositide-mediated Ca(2+) entry in the retina during phospholipase C (PLC)-mediated phototransduction. Required for vision in the dark and in dim light. Binds calmodulin. Trp and trpl act together in the light response, although it is unclear whether as heteromultimers or distinct units. Also forms a functional cation channel with Trpgamma. Activated by fatty acids, metabolic stress, inositols and GTP-binding proteins. This chain is Transient-receptor-potential-like protein (trpl), found in Drosophila melanogaster (Fruit fly).